The sequence spans 690 residues: DNA ligase (690 aa).

Residues 36 to 40 (DSVYD), 85 to 86 (SL), and E124 each bind NAD(+). K126 functions as the N6-AMP-lysine intermediate in the catalytic mechanism. NAD(+)-binding residues include R147, E184, K308, and K332. Residues C426, C429, C444, and C449 each coordinate Zn(2+). Residues 614 to 690 (NQSNVFDGKS…INENELKLLL (77 aa)) enclose the BRCT domain.

The protein belongs to the NAD-dependent DNA ligase family. LigA subfamily. Mg(2+) serves as cofactor. The cofactor is Mn(2+).

It carries out the reaction NAD(+) + (deoxyribonucleotide)n-3'-hydroxyl + 5'-phospho-(deoxyribonucleotide)m = (deoxyribonucleotide)n+m + AMP + beta-nicotinamide D-nucleotide.. Its function is as follows. DNA ligase that catalyzes the formation of phosphodiester linkages between 5'-phosphoryl and 3'-hydroxyl groups in double-stranded DNA using NAD as a coenzyme and as the energy source for the reaction. It is essential for DNA replication and repair of damaged DNA. The chain is DNA ligase from Prochlorococcus marinus (strain NATL2A).